The following is a 94-amino-acid chain: Small ribosomal subunit protein uS19 (94 aa).

The segment at 73-94 (EFAPTRTYRGHGKDAERTTRRR) is disordered. Over residues 83–94 (HGKDAERTTRRR) the composition is skewed to basic and acidic residues.

It belongs to the universal ribosomal protein uS19 family.

Functionally, protein S19 forms a complex with S13 that binds strongly to the 16S ribosomal RNA. This chain is Small ribosomal subunit protein uS19, found in Thermomicrobium roseum (strain ATCC 27502 / DSM 5159 / P-2).